We begin with the raw amino-acid sequence, 160 residues long: Major strawberry allergen Fra a 1.05 (160 aa).

It belongs to the BetVI family. Post-translationally, phosphorylated in vivo. Phosphorylation prevents its activity as ribonuclease.

Its function is as follows. Possesses ribonuclease activity in vitro. In Fragaria ananassa (Strawberry), this protein is Major strawberry allergen Fra a 1.05.